Consider the following 366-residue polypeptide: Protein-methionine-sulfoxide reductase catalytic subunit MsrP (366 aa).

The segment covering 1–22 (MHNTFTHTKNNTHTKNNTQAKN) has biased composition (low complexity). Residues 1–40 (MHNTFTHTKNNTHTKNNTQAKNSGSQTKSNAVSLNKPRKL) form a disordered region. Positions 1 to 76 (MHNTFTHTKN…TLALPASAQA (76 aa)) form a signal peptide, tat-type signal. A compositionally biased stretch (polar residues) spans 23-33 (SGSQTKSNAVS). Mo-molybdopterin contacts are provided by residues Asn-120, 123-124 (YE), Cys-178, Thr-213, Asn-265, Arg-270, and 281-283 (SIK).

The protein belongs to the MsrP family. In terms of assembly, heterodimer of a catalytic subunit (MsrP) and a heme-binding subunit (MsrQ). Mo-molybdopterin serves as cofactor. Predicted to be exported by the Tat system. The position of the signal peptide cleavage has not been experimentally proven.

It localises to the periplasm. It carries out the reaction L-methionyl-[protein] + a quinone + H2O = L-methionyl-(S)-S-oxide-[protein] + a quinol. It catalyses the reaction L-methionyl-[protein] + a quinone + H2O = L-methionyl-(R)-S-oxide-[protein] + a quinol. In terms of biological role, part of the MsrPQ system that repairs oxidized periplasmic proteins containing methionine sulfoxide residues (Met-O), using respiratory chain electrons. Thus protects these proteins from oxidative-stress damage caused by reactive species of oxygen and chlorine generated by the host defense mechanisms. MsrPQ is essential for the maintenance of envelope integrity under bleach stress, rescuing a wide series of structurally unrelated periplasmic proteins from methionine oxidation. The catalytic subunit MsrP is non-stereospecific, being able to reduce both (R-) and (S-) diastereoisomers of methionine sulfoxide. The polypeptide is Protein-methionine-sulfoxide reductase catalytic subunit MsrP (Yersinia pestis).